The following is a 498-amino-acid chain: MRINPTTSDPEVSIREKKNLGRISQIIGPVLDVAFPPGKMPNIYNALVVKGRDTLGQEINVTCEVQQLLGNNRVRAVAMSATEGLKRGMDVVDMGNPLSVPVGGATLGRIFNVLGEPVDNLGPVDTRTTSPIHKSAPAFIQLDTKLSIFETGIKVVDLLAPYRRGGKIGLFGGAGVGKTVLIMELINNIAKAHGGVSVFGGVGERTREGNDLYMEMKESGVINEQNLAESKVALVYGQMNEPPGARMRVGLTALTMAEYFRDVNEQDVLLFIDNIFRFVQAGSEVSALLGRMPSAVGYQPTLSTEMGTLQERITSTKKGSITSIQAVYVPADDLTDPAPATTFAHLDATTVLSRGLAAKGIYPAVDPLDSTSTMLQPRIVGEEHYETAQQVKQTLQRYKELQDIIAILGLDELSEEDRLTVARARKIERFLSQPFFVAEVFTGSPGKYVGLAETIRGFKLILSGEFDSLPEQAFYLVGNIDEATAKATNLEMESKLKK.

Phosphothreonine is present on threonine 6. A Phosphoserine modification is found at serine 13. Residue 172–179 (GGAGVGKT) coordinates ATP.

Belongs to the ATPase alpha/beta chains family. In terms of assembly, F-type ATPases have 2 components, CF(1) - the catalytic core - and CF(0) - the membrane proton channel. CF(1) has five subunits: alpha(3), beta(3), gamma(1), delta(1), epsilon(1). CF(0) has four main subunits: a(1), b(1), b'(1) and c(9-12).

Its subcellular location is the plastid. The protein resides in the chloroplast thylakoid membrane. It carries out the reaction ATP + H2O + 4 H(+)(in) = ADP + phosphate + 5 H(+)(out). Its function is as follows. Produces ATP from ADP in the presence of a proton gradient across the membrane. The catalytic sites are hosted primarily by the beta subunits. The sequence is that of ATP synthase subunit beta, chloroplastic from Olimarabidopsis pumila (Dwarf rocket).